The sequence spans 299 residues: Phosphoribosylaminoimidazole-succinocarboxamide synthase (299 aa).

A disordered region spans residues P259 to V279.

The protein belongs to the SAICAR synthetase family.

It carries out the reaction 5-amino-1-(5-phospho-D-ribosyl)imidazole-4-carboxylate + L-aspartate + ATP = (2S)-2-[5-amino-1-(5-phospho-beta-D-ribosyl)imidazole-4-carboxamido]succinate + ADP + phosphate + 2 H(+). It participates in purine metabolism; IMP biosynthesis via de novo pathway; 5-amino-1-(5-phospho-D-ribosyl)imidazole-4-carboxamide from 5-amino-1-(5-phospho-D-ribosyl)imidazole-4-carboxylate: step 1/2. The protein is Phosphoribosylaminoimidazole-succinocarboxamide synthase of Streptomyces avermitilis (strain ATCC 31267 / DSM 46492 / JCM 5070 / NBRC 14893 / NCIMB 12804 / NRRL 8165 / MA-4680).